The following is a 427-amino-acid chain: 12-alpha,13-alpha-dihydroxyfumitremorgin C prenyltransferase (427 aa).

Residue Glu94 coordinates substrate. Residues Arg105, Lys192, Tyr194, Tyr268, Gln353, Tyr355, Tyr419, and Tyr423 each coordinate dimethylallyl diphosphate.

It belongs to the tryptophan dimethylallyltransferase family.

The catalysed reaction is 12alpha,13alpha-dihydroxyfumitremorgin C + dimethylallyl diphosphate = fumitremorgin B + diphosphate. Its pathway is mycotoxin biosynthesis. Its function is as follows. 12-alpha,13-alpha-dihydroxyfumitremorgin C prenyltransferase; part of the gene cluster that mediates the biosynthesis of fumitremorgins, indole alkaloids that carry not only intriguing chemical structures, but also interesting biological and pharmacological activities. The biosynthesis of fumitremorgin-type alkaloids begins by condensation of the two amino acids L-tryptophan and L-proline to brevianamide F, catalyzed by the non-ribosomal peptide synthetase ftmA. Brevianamide F is then prenylated by the prenyltransferase ftmPT1/ftmB in the presence of dimethylallyl diphosphate, resulting in the formation of tryprostatin B. The three cytochrome P450 monooxygenases, ftmP450-1/ftmC, ftmP450-2/ftmE and ftmP450-3/FtmG, are responsible for the conversion of tryprostatin B to 6-hydroxytryprostatin B, tryprostatin A to fumitremorgin C and fumitremorgin C to 12,13-dihydroxyfumitremorgin C, respectively. The putative methyltransferase ftmMT/ftmD is expected for the conversion of 6-hydroxytryprostatin B to tryprostatin A. FtmPT2/FtmH catalyzes the prenylation of 12,13-dihydroxyfumitre-morgin C in the presence of dimethylallyl diphosphate, resulting in the formation of fumitremorgin B. Fumitremorgin B is further converted to verruculogen by ftmOx1/ftmF via the insertion of an endoperoxide bond between the two prenyl moieties. In some fungal species, verruculogen is further converted to fumitremorgin A, but the enzymes involved in this step have not been identified yet. This chain is 12-alpha,13-alpha-dihydroxyfumitremorgin C prenyltransferase, found in Aspergillus fumigatus (Neosartorya fumigata).